Here is a 378-residue protein sequence, read N- to C-terminus: GTP 3',8-cyclase 3 (378 aa).

One can recognise a Radical SAM core domain in the interval 40 to 259 (RCGRTMGDLR…STLGKKYGPI (220 aa)). Arginine 49 is a binding site for GTP. 2 residues coordinate [4Fe-4S] cluster: cysteine 56 and cysteine 60. Tyrosine 62 contacts S-adenosyl-L-methionine. Cysteine 63 is a binding site for [4Fe-4S] cluster. Arginine 99 provides a ligand contact to GTP. Residue glycine 103 coordinates S-adenosyl-L-methionine. Residue threonine 134 coordinates GTP. S-adenosyl-L-methionine is bound at residue serine 158. Lysine 195 contacts GTP. Methionine 229 is a binding site for S-adenosyl-L-methionine. [4Fe-4S] cluster is bound by residues cysteine 292 and cysteine 295. 297–299 (RSR) lines the GTP pocket. Position 309 (cysteine 309) interacts with [4Fe-4S] cluster.

The protein belongs to the radical SAM superfamily. MoaA family. In terms of assembly, monomer and homodimer. The cofactor is [4Fe-4S] cluster.

The catalysed reaction is GTP + AH2 + S-adenosyl-L-methionine = (8S)-3',8-cyclo-7,8-dihydroguanosine 5'-triphosphate + 5'-deoxyadenosine + L-methionine + A + H(+). The protein operates within cofactor biosynthesis; molybdopterin biosynthesis. Functionally, catalyzes the cyclization of GTP to (8S)-3',8-cyclo-7,8-dihydroguanosine 5'-triphosphate. In Mycobacterium bovis (strain ATCC BAA-935 / AF2122/97), this protein is GTP 3',8-cyclase 3.